The sequence spans 437 residues: Branched-chain amino acid transport system 2 carrier protein (437 aa).

The next 12 helical transmembrane spans lie at Leu-9 to Pro-29, Ala-43 to Ala-63, Ala-80 to Arg-100, Gly-117 to Leu-137, Val-149 to Pro-169, Gly-192 to Ile-212, Met-228 to Leu-248, Leu-280 to Ala-300, Leu-308 to Ala-328, Leu-335 to Ala-355, Val-369 to Ala-389, and Leu-404 to Val-424.

This sequence belongs to the branched chain amino acid transporter family.

Its subcellular location is the cell inner membrane. In terms of biological role, component of the LIV-II transport system for branched-chain amino acids. BraB is specific for isoleucine, leucine and valine. The LIV-II transport system is coupled to sodium and lithium ions. The chain is Branched-chain amino acid transport system 2 carrier protein (braB) from Pseudomonas aeruginosa (strain ATCC 15692 / DSM 22644 / CIP 104116 / JCM 14847 / LMG 12228 / 1C / PRS 101 / PAO1).